The primary structure comprises 424 residues: Histidine--tRNA ligase (424 aa).

It belongs to the class-II aminoacyl-tRNA synthetase family. Homodimer.

The protein resides in the cytoplasm. It carries out the reaction tRNA(His) + L-histidine + ATP = L-histidyl-tRNA(His) + AMP + diphosphate + H(+). In Salmonella paratyphi A (strain ATCC 9150 / SARB42), this protein is Histidine--tRNA ligase.